The sequence spans 172 residues: Adenine phosphoribosyltransferase (172 aa).

The protein belongs to the purine/pyrimidine phosphoribosyltransferase family. Homodimer.

The protein resides in the cytoplasm. It carries out the reaction AMP + diphosphate = 5-phospho-alpha-D-ribose 1-diphosphate + adenine. It functions in the pathway purine metabolism; AMP biosynthesis via salvage pathway; AMP from adenine: step 1/1. Its function is as follows. Catalyzes a salvage reaction resulting in the formation of AMP, that is energically less costly than de novo synthesis. This chain is Adenine phosphoribosyltransferase, found in Prochlorococcus marinus (strain NATL2A).